We begin with the raw amino-acid sequence, 261 residues long: Small ribosomal subunit protein eS4 (261 aa).

An S4 RNA-binding domain is found at 42 to 100 (LPLILILRNRLKYALTYREVVSILMQRHILVDGKIHFCIRLSDVVSIPKTNENFRLLYD).

It belongs to the eukaryotic ribosomal protein eS4 family.

The protein localises to the cytoplasm. In Prunus armeniaca (Apricot), this protein is Small ribosomal subunit protein eS4 (RPS4).